Here is a 154-residue protein sequence, read N- to C-terminus: MADEQLQLPPEQISVLRKAFDAFDREKSGSISTNMVEEILRLMGQPFNRRTLEELIDEVDADKSGRLEFDEFVTLAAKFIIEEDSEAMEKELREAFRLYDKEGNGYIPTSCLREILRELDEQLTSDELDMMIEEIDADGSGTVDFDEFMEMMTG.

EF-hand domains are found at residues 11–46 (EQIS…MGQP), 47–82 (FNRR…FIIE), 87–122 (AMEK…LDEQ), and 123–154 (LTSD…MMTG). Positions 60, 62, 64, 66, and 71 each coordinate Ca(2+). Positions 136, 138, 140, 142, and 147 each coordinate Ca(2+).

The protein belongs to the troponin C family.

Functionally, troponin is the central regulatory protein of striated muscle contraction. It consists of three components: Troponin-I (Tn-I) which is the inhibitor of actomyosin ATPase, Troponin-T (Tn-T) which contains the binding site for tropomyosin and Troponin-C (Tn-C). The binding of calcium to Tn-C abolishes the inhibitory action of Tn on actin filaments. This chain is Troponin C, isoallergen Bla g 6.0301, found in Blattella germanica (German cockroach).